We begin with the raw amino-acid sequence, 161 residues long: Phosphopantetheine adenylyltransferase (161 aa).

Ser9 is a substrate binding site. Residues Ser9 to Phe10 and His17 contribute to the ATP site. Substrate is bound by residues Lys41, Leu73, and Lys87. Residues Gly88–Arg90, Glu98, and Tyr123–Ser129 contribute to the ATP site.

Belongs to the bacterial CoaD family. As to quaternary structure, homohexamer. It depends on Mg(2+) as a cofactor.

The protein localises to the cytoplasm. The catalysed reaction is (R)-4'-phosphopantetheine + ATP + H(+) = 3'-dephospho-CoA + diphosphate. Its pathway is cofactor biosynthesis; coenzyme A biosynthesis; CoA from (R)-pantothenate: step 4/5. Its function is as follows. Reversibly transfers an adenylyl group from ATP to 4'-phosphopantetheine, yielding dephospho-CoA (dPCoA) and pyrophosphate. This is Phosphopantetheine adenylyltransferase from Clostridium novyi (strain NT).